The chain runs to 459 residues: tRNA modification GTPase MnmE (459 aa).

Positions 22, 85, and 124 each coordinate (6S)-5-formyl-5,6,7,8-tetrahydrofolate. In terms of domain architecture, TrmE-type G spans 221–380 (GLSTVIVGKP…LELQIRDLFF (160 aa)). Asn-231 is a binding site for K(+). GTP contacts are provided by residues 231–236 (NVGKSS), 250–256 (TEVAGTT), and 275–278 (DTAG). A Mg(2+)-binding site is contributed by Ser-235. Positions 250, 252, and 255 each coordinate K(+). Residue Thr-256 coordinates Mg(2+). Residue Lys-459 coordinates (6S)-5-formyl-5,6,7,8-tetrahydrofolate.

It belongs to the TRAFAC class TrmE-Era-EngA-EngB-Septin-like GTPase superfamily. TrmE GTPase family. As to quaternary structure, homodimer. Heterotetramer of two MnmE and two MnmG subunits. It depends on K(+) as a cofactor.

It is found in the cytoplasm. Exhibits a very high intrinsic GTPase hydrolysis rate. Involved in the addition of a carboxymethylaminomethyl (cmnm) group at the wobble position (U34) of certain tRNAs, forming tRNA-cmnm(5)s(2)U34. This chain is tRNA modification GTPase MnmE, found in Staphylococcus haemolyticus (strain JCSC1435).